Reading from the N-terminus, the 113-residue chain is U11-theraphotoxin-Hhn1a (113 aa).

The signal sequence occupies residues Met1–Ala21. Residues Asp22–Arg74 constitute a propeptide that is removed on maturation. The interval Glu61–Asp83 is disordered. Cystine bridges form between Cys75/Cys90, Cys82/Cys95, and Cys89/Cys110.

The protein belongs to the neurotoxin 14 (magi-1) family. 01 (HNTX-16) subfamily. As to expression, expressed by the venom gland.

It is found in the secreted. The sequence is that of U11-theraphotoxin-Hhn1a from Cyriopagopus hainanus (Chinese bird spider).